The sequence spans 73 residues: QVHCYNSNFPKGMLLRFFVHFYDMEIIEEEAFLAWKEDITQEFPGKGKALFQVNQWLTWLETAEEEESEEEAD.

One can recognise a W2 domain in the interval 1-70; it reads QVHCYNSNFP…ETAEEEESEE (70 aa).

It belongs to the eukaryotic initiation factor 4G family. Interacts with the serine/threonine protein kinases MKNK1 and MKNK2. Binds EIF4A and EIF3. Phosphorylation; hyperphosphorylated during mitosis.

Functionally, appears to play a role in the switch from cap-dependent to IRES-mediated translation during mitosis, apoptosis and viral infection. Cleaved by some caspases and viral proteases. The polypeptide is Eukaryotic translation initiation factor 4 gamma 2 (EIF4G2) (Gallus gallus (Chicken)).